A 469-amino-acid chain; its full sequence is Probable NADPH:adrenodoxin oxidoreductase, mitochondrial (469 aa).

A mitochondrion-targeting transit peptide spans Met1–Asn38. 4 residues coordinate FAD: Ala27, Glu48, Leu56, and Val92. NADP(+)-binding positions include His164–Val167, Arg208–Arg209, and Glu220. FAD contacts are provided by residues Trp375 and Gly382–Ile384. Position 382 (Gly382) interacts with NADP(+).

The protein belongs to the ferredoxin--NADP reductase type 1 family. FAD serves as cofactor.

It is found in the mitochondrion inner membrane. The catalysed reaction is 2 reduced [adrenodoxin] + NADP(+) + H(+) = 2 oxidized [adrenodoxin] + NADPH. In terms of biological role, adrenodoxin reductase transfers electrons from NADPH to adrenodoxin, which is involved in heme A biosynthesis and in iron-sulfur cluster assembly. Involved in the electron transfer to heme A synthase etp1(cd), a heme protein that catalyzes the conversion of heme O to heme A. Required for the de novo synthesis of Fe-S clusters on iron sulfur cluster assembly protein isu1. Involved in electron delivery for Fe-S cluster synthesis. Essential for coenzyme Q biosynthesis. May be involved in the electron transfer required for the hydroxylation reaction performed by coq6. May play a role in cellular and mitochondrial iron homeostasis. In Schizosaccharomyces pombe (strain 972 / ATCC 24843) (Fission yeast), this protein is Probable NADPH:adrenodoxin oxidoreductase, mitochondrial (arh1).